The following is a 465-amino-acid chain: Argininosuccinate lyase (465 aa).

The protein belongs to the lyase 1 family. Argininosuccinate lyase subfamily.

It localises to the cytoplasm. The enzyme catalyses 2-(N(omega)-L-arginino)succinate = fumarate + L-arginine. It functions in the pathway amino-acid biosynthesis; L-arginine biosynthesis; L-arginine from L-ornithine and carbamoyl phosphate: step 3/3. The chain is Argininosuccinate lyase from Clostridium botulinum (strain Eklund 17B / Type B).